A 407-amino-acid polypeptide reads, in one-letter code: Argininosuccinate synthase (407 aa).

Residues 10-18 (AYSGGLDTS) and alanine 37 contribute to the ATP site. Positions 88 and 93 each coordinate L-citrulline. An ATP-binding site is contributed by glycine 118. 3 residues coordinate L-aspartate: threonine 120, asparagine 124, and aspartate 125. Asparagine 124 is a binding site for L-citrulline. L-citrulline contacts are provided by arginine 128, serine 179, serine 188, glutamate 264, and tyrosine 276.

The protein belongs to the argininosuccinate synthase family. Type 1 subfamily. Homotetramer.

It localises to the cytoplasm. It carries out the reaction L-citrulline + L-aspartate + ATP = 2-(N(omega)-L-arginino)succinate + AMP + diphosphate + H(+). It functions in the pathway amino-acid biosynthesis; L-arginine biosynthesis; L-arginine from L-ornithine and carbamoyl phosphate: step 2/3. In Jannaschia sp. (strain CCS1), this protein is Argininosuccinate synthase.